The following is a 165-amino-acid chain: MNLYLTLFSFCFLAIMAEAASEIPEKFFGKYDLDRSENFDEFLAAKGVSWFVRQMIKLAKVSKVLAKNETPGKYNMENLTSKKNTLYHGWELGKTFEAEGLDGVAHKITFSFKDGVLSEHHIRLNDPEHSAETYYYTIENDQLVMKMVNNGITCRRWFKRSTGKK.

An N-terminal signal peptide occupies residues 1–19 (MNLYLTLFSFCFLAIMAEA).

Belongs to the calycin superfamily. Fatty-acid binding protein (FABP) family. As to expression, expressed in presumptive hypodermal cells by the comma stage and in posterior body wall muscle cells by the two-fold stage. From L1 to adult stages, expression continues in body wall muscle cells adjacent to the pseudocoelom, while hypodermal expression is extinguished.

Its subcellular location is the secreted. Its function is as follows. May play a role in sequestering potentially toxic fatty acids and their peroxidation products, or it may be involved in the maintenance of the impermeable lipid layer of the eggshell. The sequence is that of Fatty acid-binding protein homolog 3 (lbp-3) from Caenorhabditis elegans.